A 641-amino-acid chain; its full sequence is WW domain-binding protein 11 (641 aa).

The segment covering 1 to 11 has biased composition (polar residues); sequence MGRRSTSSTKS. The tract at residues 1 to 37 is disordered; it reads MGRRSTSSTKSGKFMNPTDQARKEARKRELKKNKKQR. The tract at residues 1 to 45 is required for nuclear import; sequence MGRRSTSSTKSGKFMNPTDQARKEARKRELKKNKKQRMMVRAAVL. The residue at position 13 (Lys13) is an N6-acetyllysine. A compositionally biased stretch (basic residues) spans 28–37; the sequence is RELKKNKKQR. Residues 75 to 133 are a coiled coil; it reads EKVLKDKRKKLRETFERILRLYEKENPDIYKELRKLEVEYEQKRAQLSQYFDAVKNAQH. Ser181 is modified (phosphoserine). Positions 186 to 213 are disordered; it reads LGHGVPRLPPGRKPPGPPPGPPPPQVVQ. Arg192 bears the Omega-N-methylarginine mark. The segment covering 192–210 has biased composition (pro residues); it reads RLPPGRKPPGPPPGPPPPQ. Residues 217 to 221 form an interaction with PP1 region; it reads RKVGF. Residue Tyr236 is modified to Phosphotyrosine. A disordered region spans residues 236 to 552; sequence YSPELAQRGH…RPKADDTSAA (317 aa). The residue at position 237 (Ser237) is a Phosphoserine. Residues 253–263 show a composition bias toward acidic residues; it reads SEDDGYPEDMD. A compositionally biased stretch (basic and acidic residues) spans 276 to 304; it reads TDKSDGESDGDEFVHRDNGERDNNEEKKS. A phosphoserine mark is found at Ser279 and Ser283. The tract at residues 306–310 is interaction with PP1; that stretch reads LSVRF. Acidic residues predominate over residues 351 to 365; sequence EFSEDDDEDDSDDSE. Residues Ser353, Ser361, and Ser364 each carry the phosphoserine modification. Positions 366–380 are enriched in basic and acidic residues; sequence AEKQSQKQHKEESHS. The segment covering 386–404 has biased composition (low complexity); sequence ASSQQQAPPQSVPPSQIQA. Composition is skewed to pro residues over residues 405 to 447, 456 to 504, and 510 to 530; these read PPMP…PPGM, RLLP…PPRP, and PLVPPLGPAPPGLFPPAPLPN. Positions 455–466 match the PGR motif; sequence PRLLPPGPPPGR. Lys557 is covalently cross-linked (Glycyl lysine isopeptide (Lys-Gly) (interchain with G-Cter in SUMO2)). Lys565 bears the N6-acetyllysine mark. Lys572 participates in a covalent cross-link: Glycyl lysine isopeptide (Lys-Gly) (interchain with G-Cter in SUMO2). The interval 587–623 is disordered; sequence RENKGATAAPQRKSEDDSAVPLAKAAPKSGPSVPVSV. Ser600 bears the Phosphoserine mark.

As to quaternary structure, interacts with PPP1CA, PPP1CB and PPP1CC. Interacts via the PGR motif with PQBP1 in the nucleus. Interacts with the WW domains of WBP4. In terms of tissue distribution, ubiquitous. Highly expressed in the heart, pancreas, kidney skeletal muscle, placenta and brain (at protein level). Weakly expressed in liver and lung.

Its subcellular location is the nucleus. The protein resides in the cytoplasm. Functionally, activates pre-mRNA splicing. May inhibit PP1 phosphatase activity. This Homo sapiens (Human) protein is WW domain-binding protein 11.